A 148-amino-acid chain; its full sequence is Large-conductance mechanosensitive channel (148 aa).

2 helical membrane-spanning segments follow: residues 9–29 and 79–99; these read AFAV…GAAF and IQTV…VKAI.

It belongs to the MscL family. Homopentamer.

It is found in the cell inner membrane. Channel that opens in response to stretch forces in the membrane lipid bilayer. May participate in the regulation of osmotic pressure changes within the cell. This chain is Large-conductance mechanosensitive channel, found in Pseudomonas syringae pv. syringae (strain B728a).